Here is a 20-residue protein sequence, read N- to C-terminus: Cathepsin L1 (20 aa).

Positions A1–E10 are enriched in basic and acidic residues. The interval A1–Q20 is disordered.

The protein belongs to the peptidase C1 family. In terms of assembly, dimer of a heavy and a light chain linked by disulfide bonds.

It localises to the lysosome. The catalysed reaction is Specificity close to that of papain. As compared to cathepsin B, cathepsin L exhibits higher activity toward protein substrates, but has little activity on Z-Arg-Arg-NHMec, and no peptidyl-dipeptidase activity.. Thiol protease that assists the parasite in burrowing through the gut wall and liver of its mammalian host. This Fasciola hepatica (Liver fluke) protein is Cathepsin L1.